The sequence spans 331 residues: Biotin synthase (331 aa).

In terms of domain architecture, Radical SAM core spans 52 to 277 (PDVEVEGIIS…RTMLRFAGGR (226 aa)). The [4Fe-4S] cluster site is built by Cys67, Cys71, and Cys74. Positions 110, 143, 202, and 272 each coordinate [2Fe-2S] cluster.

This sequence belongs to the radical SAM superfamily. Biotin synthase family. Homodimer. [4Fe-4S] cluster serves as cofactor. Requires [2Fe-2S] cluster as cofactor.

The enzyme catalyses (4R,5S)-dethiobiotin + (sulfur carrier)-SH + 2 reduced [2Fe-2S]-[ferredoxin] + 2 S-adenosyl-L-methionine = (sulfur carrier)-H + biotin + 2 5'-deoxyadenosine + 2 L-methionine + 2 oxidized [2Fe-2S]-[ferredoxin]. Its pathway is cofactor biosynthesis; biotin biosynthesis; biotin from 7,8-diaminononanoate: step 2/2. Functionally, catalyzes the conversion of dethiobiotin (DTB) to biotin by the insertion of a sulfur atom into dethiobiotin via a radical-based mechanism. This is Biotin synthase from Mycobacterium sp. (strain JLS).